A 248-amino-acid chain; its full sequence is Ribonuclease HII (248 aa).

An RNase H type-2 domain is found at 29-219 (DIVCGVDEAG…VREAHLRLGT (191 aa)). Residues D35, E36, and D128 each coordinate a divalent metal cation.

It belongs to the RNase HII family. Requires Mn(2+) as cofactor. Mg(2+) serves as cofactor.

It localises to the cytoplasm. The catalysed reaction is Endonucleolytic cleavage to 5'-phosphomonoester.. Endonuclease that specifically degrades the RNA of RNA-DNA hybrids. The protein is Ribonuclease HII of Paraburkholderia xenovorans (strain LB400).